A 156-amino-acid polypeptide reads, in one-letter code: 3-hydroxyacyl-[acyl-carrier-protein] dehydratase FabZ (156 aa).

Histidine 61 is a catalytic residue.

Belongs to the thioester dehydratase family. FabZ subfamily.

It is found in the cytoplasm. The enzyme catalyses a (3R)-hydroxyacyl-[ACP] = a (2E)-enoyl-[ACP] + H2O. Involved in unsaturated fatty acids biosynthesis. Catalyzes the dehydration of short chain beta-hydroxyacyl-ACPs and long chain saturated and unsaturated beta-hydroxyacyl-ACPs. This Acaryochloris marina (strain MBIC 11017) protein is 3-hydroxyacyl-[acyl-carrier-protein] dehydratase FabZ.